A 977-amino-acid chain; its full sequence is Synaptopodin 2-like protein (977 aa).

Positions 6-88 (EVLVTLSGGA…QLVLTVQRLA (83 aa)) constitute a PDZ domain. Disordered regions lie at residues 91 to 226 (GPVQ…GPLR), 317 to 352 (AGTGAEEEDGVPPTSESELDEEAFSDARSLTNQSDW), and 364 to 677 (AGSR…EDAL). Residues S108 and S111 each carry the phosphoserine modification. Residues 109–123 (PLSPEPPGAPVPQPL) show a composition bias toward pro residues. T141 carries the post-translational modification Phosphothreonine. Phosphoserine occurs at positions 143, 178, and 180. Residues 183–192 (EPAPTIPGPP) are compositionally biased toward pro residues. Positions 194 to 203 (QGDSRVSSPS) are enriched in polar residues. Low complexity predominate over residues 216–226 (EALLLPHGPLR). A phosphoserine mark is found at S345, S350, S374, S381, and S384. Position 386 is an omega-N-methylarginine (R386). Positions 436-450 (PPSPLPAPVASPRPF) are enriched in pro residues. Omega-N-methylarginine is present on residues R466, R469, and R479. A compositionally biased stretch (polar residues) spans 510–525 (LSSQGPTPLPSFTSGV). Low complexity-rich tracts occupy residues 530–545 (PVSGSPSTPRSSGPVT) and 572–595 (SAAAMTSTASIFLSAPLRPSARPE). The segment covering 596 to 607 (APAPGPGAPEPP) has biased composition (pro residues). Residues S670 and S678 each carry the phosphoserine modification. The interval 697–802 (TLPHVTPKTP…PSLPPSWKYS (106 aa)) is disordered. The span at 704–730 (KTPPPMAPKTPPPMTPKTPPPVAPKPP) shows a compositional bias: pro residues. Phosphothreonine occurs at positions 705 and 713. Position 757 is an omega-N-methylarginine (R757). The span at 781 to 796 (GLGPRPRSPSPTPSLP) shows a compositional bias: pro residues. A phosphoserine mark is found at S788 and S790. T792 carries the phosphothreonine modification. R806, R826, and R889 each carry omega-N-methylarginine. S891 carries the post-translational modification Phosphoserine. Phosphothreonine occurs at positions 892 and 898. An Omega-N-methylarginine modification is found at R910. Residue R921 is modified to Asymmetric dimethylarginine; alternate. R921 bears the Omega-N-methylarginine; alternate mark. Positions 922 to 950 (TELASAPVPSPAPPPEAPRGLGASPSSCG) are disordered. Positions 929 to 938 (VPSPAPPPEA) are enriched in pro residues. An omega-N-methylarginine mark is found at R955 and R957.

This sequence belongs to the synaptopodin family.

It localises to the cytoplasm. The protein localises to the cytoskeleton. Functionally, actin-associated protein that may play a role in modulating actin-based shape. This Homo sapiens (Human) protein is Synaptopodin 2-like protein (SYNPO2L).